The following is a 156-amino-acid chain: tRNA (cytidine(34)-2'-O)-methyltransferase (156 aa).

S-adenosyl-L-methionine-binding residues include Gly-102, Leu-124, and Ser-132.

This sequence belongs to the class IV-like SAM-binding methyltransferase superfamily. RNA methyltransferase TrmH family. TrmL subfamily. In terms of assembly, homodimer.

It is found in the cytoplasm. The catalysed reaction is cytidine(34) in tRNA + S-adenosyl-L-methionine = 2'-O-methylcytidine(34) in tRNA + S-adenosyl-L-homocysteine + H(+). The enzyme catalyses 5-carboxymethylaminomethyluridine(34) in tRNA(Leu) + S-adenosyl-L-methionine = 5-carboxymethylaminomethyl-2'-O-methyluridine(34) in tRNA(Leu) + S-adenosyl-L-homocysteine + H(+). Its function is as follows. Methylates the ribose at the nucleotide 34 wobble position in the two leucyl isoacceptors tRNA(Leu)(CmAA) and tRNA(Leu)(cmnm5UmAA). Catalyzes the methyl transfer from S-adenosyl-L-methionine to the 2'-OH of the wobble nucleotide. The sequence is that of tRNA (cytidine(34)-2'-O)-methyltransferase from Burkholderia pseudomallei (strain 1106a).